A 438-amino-acid chain; its full sequence is DNA primase DnaG (438 aa).

A Toprim domain is found at 171–245; sequence DAILVVEGRA…DIDYVARAPE (75 aa). Mg(2+)-binding residues include E177, D219, and D221.

It belongs to the archaeal DnaG primase family. As to quaternary structure, forms a ternary complex with MCM helicase and DNA. Component of the archaeal exosome complex. The cofactor is Mg(2+).

It catalyses the reaction ssDNA + n NTP = ssDNA/pppN(pN)n-1 hybrid + (n-1) diphosphate.. Functionally, RNA polymerase that catalyzes the synthesis of short RNA molecules used as primers for DNA polymerase during DNA replication. Also part of the exosome, which is a complex involved in RNA degradation. Acts as a poly(A)-binding protein that enhances the interaction between heteromeric, adenine-rich transcripts and the exosome. The protein is DNA primase DnaG of Methanothrix thermoacetophila (strain DSM 6194 / JCM 14653 / NBRC 101360 / PT) (Methanosaeta thermophila).